The chain runs to 170 residues: Probable inactive uracil-DNA glycosylase, mitochondrial (170 aa).

The N-terminal 53 residues, 1 to 53 (MALSTPKTLMDFFQPAKRLKASPSSSSSFPAVSVAGRSRDLGSVANSPPRVTV), are a transit peptide targeting the mitochondrion.

It belongs to the uracil-DNA glycosylase (UDG) superfamily. UNG family.

It localises to the mitochondrion. In terms of biological role, probable inactive paralog of AtUNG (AC Q9LIH6) generated by a gene duplication event and subsequently disrupted by at least two transposon insertions. The polypeptide is Probable inactive uracil-DNA glycosylase, mitochondrial (Arabidopsis thaliana (Mouse-ear cress)).